Consider the following 482-residue polypeptide: ATP synthase subunit beta (482 aa).

161–168 (GGAGVGKT) serves as a coordination point for ATP.

Belongs to the ATPase alpha/beta chains family. F-type ATPases have 2 components, CF(1) - the catalytic core - and CF(0) - the membrane proton channel. CF(1) has five subunits: alpha(3), beta(3), gamma(1), delta(1), epsilon(1). CF(0) has three main subunits: a(1), b(2) and c(9-12). The alpha and beta chains form an alternating ring which encloses part of the gamma chain. CF(1) is attached to CF(0) by a central stalk formed by the gamma and epsilon chains, while a peripheral stalk is formed by the delta and b chains.

Its subcellular location is the cell inner membrane. It carries out the reaction ATP + H2O + 4 H(+)(in) = ADP + phosphate + 5 H(+)(out). In terms of biological role, produces ATP from ADP in the presence of a proton gradient across the membrane. The catalytic sites are hosted primarily by the beta subunits. This Solibacter usitatus (strain Ellin6076) protein is ATP synthase subunit beta.